The following is a 1350-amino-acid chain: Probable serine/threonine-protein kinase irlE (1350 aa).

N37 carries an N-linked (GlcNAc...) asparagine glycan. A helical transmembrane segment spans residues 149 to 169; that stretch reads FWEILASCYGTISFIKFFNIF. Positions 731–802 form a coiled coil; it reads EAELKEKFEI…NIQQNYENQH (72 aa). A compositionally biased stretch (basic residues) spans 761–771; that stretch reads LKKKNKLKKQK. Disordered stretches follow at residues 761 to 795 and 807 to 864; these read LKKKNKLKKQKNQQQQQQAKQQAQQQKQQHQQNIQ and RKFN…TTNS. The span at 772 to 795 shows a compositional bias: low complexity; the sequence is NQQQQQQAKQQAQQQKQQHQQNIQ. Polar residues predominate over residues 809–823; it reads FNQQTKGRPISPSSI. Low complexity predominate over residues 824–864; it reads QNQNLNPTLLQNQNQTSNPTPNLESTKKATPTTTTTTTTNS. The 264-residue stretch at 903-1166 folds into the Protein kinase domain; sequence KKESNILGRG…LSSVLKHPLF (264 aa). ATP contacts are provided by residues 909-917 and K932; that span reads LGRGSNGTL. D1034 functions as the Proton acceptor in the catalytic mechanism. The KEN domain maps to 1169 to 1346; that stretch reads SLKKIKFLES…KNSIHFSNDT (178 aa).

Belongs to the protein kinase superfamily. Ser/Thr protein kinase family.

Its subcellular location is the membrane. It catalyses the reaction L-seryl-[protein] + ATP = O-phospho-L-seryl-[protein] + ADP + H(+). The catalysed reaction is L-threonyl-[protein] + ATP = O-phospho-L-threonyl-[protein] + ADP + H(+). The polypeptide is Probable serine/threonine-protein kinase irlE (irlE) (Dictyostelium discoideum (Social amoeba)).